The primary structure comprises 164 residues: UPF0114 protein YqhA (164 aa).

The next 3 membrane-spanning stretches (helical) occupy residues 15–35 (LLAPVYFGLSLALVALALKFF), 53–73 (LILVLLSLVDMTLVGGLLVMV), and 136–156 (LMWYVIIHLTFVLSAFVMGYL).

It belongs to the UPF0114 family.

It is found in the cell membrane. The chain is UPF0114 protein YqhA from Escherichia coli O139:H28 (strain E24377A / ETEC).